Here is a 497-residue protein sequence, read N- to C-terminus: tRNA-2-methylthio-N(6)-dimethylallyladenosine synthase (497 aa).

The region spanning 44–161 (KKVFVTTQGC…LPELYDQSHQ (118 aa)) is the MTTase N-terminal domain. Cysteine 53, cysteine 90, cysteine 124, cysteine 205, cysteine 209, and cysteine 212 together coordinate [4Fe-4S] cluster. The Radical SAM core domain occupies 191 to 423 (RVEGFKAFVS…QKVIIDSTLA (233 aa)). The 69-residue stretch at 426–494 (HEMVGTTTRV…PHMVKGEIEA (69 aa)) folds into the TRAM domain.

Belongs to the methylthiotransferase family. MiaB subfamily. Monomer. [4Fe-4S] cluster serves as cofactor.

It is found in the cytoplasm. It catalyses the reaction N(6)-dimethylallyladenosine(37) in tRNA + (sulfur carrier)-SH + AH2 + 2 S-adenosyl-L-methionine = 2-methylsulfanyl-N(6)-dimethylallyladenosine(37) in tRNA + (sulfur carrier)-H + 5'-deoxyadenosine + L-methionine + A + S-adenosyl-L-homocysteine + 2 H(+). Its function is as follows. Catalyzes the methylthiolation of N6-(dimethylallyl)adenosine (i(6)A), leading to the formation of 2-methylthio-N6-(dimethylallyl)adenosine (ms(2)i(6)A) at position 37 in tRNAs that read codons beginning with uridine. In Psychrobacter cryohalolentis (strain ATCC BAA-1226 / DSM 17306 / VKM B-2378 / K5), this protein is tRNA-2-methylthio-N(6)-dimethylallyladenosine synthase.